A 114-amino-acid polypeptide reads, in one-letter code: Histone H2B (114 aa).

The disordered stretch occupies residues 1-22 (MAKTPSKKAAKAPKKAGSKRNK). An N6-acetyllysine modification is found at K3. K110 is covalently cross-linked (Glycyl lysine isopeptide (Lys-Gly) (interchain with G-Cter in ubiquitin)).

It belongs to the histone H2B family. The nucleosome is a histone octamer containing two molecules each of H2A, H2B, H3 and H4 assembled in one H3-H4 heterotetramer and two H2A-H2B heterodimers. The octamer wraps approximately 147 bp of DNA. Monoubiquitination of Lys-110 gives a specific tag for epigenetic transcriptional activation and is also prerequisite for histone H3 'Lys-4' and 'Lys-79' methylation.

The protein localises to the nucleus. It is found in the chromosome. In terms of biological role, core component of nucleosome. Nucleosomes wrap and compact DNA into chromatin, limiting DNA accessibility to the cellular machineries which require DNA as a template. Histones thereby play a central role in transcription regulation, DNA repair, DNA replication and chromosomal stability. DNA accessibility is regulated via a complex set of post-translational modifications of histones, also called histone code, and nucleosome remodeling. This Olisthodiscus luteus (Marine phytoflagellate) protein is Histone H2B.